Consider the following 308-residue polypeptide: Maspardin (308 aa).

The AB hydrolase-1 domain maps to 87 to 159; it reads FCDGFRKLLD…NSFWLMPAFM (73 aa).

It belongs to the AB hydrolase superfamily. In terms of assembly, interacts with CD4. Interacts with ALDH16A1.

It localises to the cytoplasm. Functionally, may play a role as a negative regulatory factor in CD4-dependent T-cell activation. The polypeptide is Maspardin (SPG21) (Macaca fascicularis (Crab-eating macaque)).